Here is a 418-residue protein sequence, read N- to C-terminus: Gamma-glutamyl phosphate reductase (418 aa).

The protein belongs to the gamma-glutamyl phosphate reductase family.

It localises to the cytoplasm. The enzyme catalyses L-glutamate 5-semialdehyde + phosphate + NADP(+) = L-glutamyl 5-phosphate + NADPH + H(+). The protein operates within amino-acid biosynthesis; L-proline biosynthesis; L-glutamate 5-semialdehyde from L-glutamate: step 2/2. Functionally, catalyzes the NADPH-dependent reduction of L-glutamate 5-phosphate into L-glutamate 5-semialdehyde and phosphate. The product spontaneously undergoes cyclization to form 1-pyrroline-5-carboxylate. In Teredinibacter turnerae (strain ATCC 39867 / T7901), this protein is Gamma-glutamyl phosphate reductase.